The chain runs to 276 residues: uncharacterized protein (276 aa).

The first 25 residues, M1–A25, serve as a signal peptide directing secretion. C26 carries the N-palmitoyl cysteine lipid modification. A lipid anchor (S-diacylglycerol cysteine) is attached at C26.

It belongs to the MG439/MG440 family.

It localises to the cell membrane. This is an uncharacterized protein from Mycoplasma pneumoniae (strain ATCC 29342 / M129 / Subtype 1) (Mycoplasmoides pneumoniae).